We begin with the raw amino-acid sequence, 225 residues long: Ribonuclease 3 (225 aa).

The 130-residue stretch at 4-133 (FEKLETLLGY…LIAAIYLDSN (130 aa)) folds into the RNase III domain. Glu46 is a binding site for Mg(2+). Residue Asp50 is part of the active site. 2 residues coordinate Mg(2+): Asn119 and Glu122. Glu122 is an active-site residue. Positions 158 to 225 (DPKTALQEWA…AARSLLHRLK (68 aa)) constitute a DRBM domain.

This sequence belongs to the ribonuclease III family. In terms of assembly, homodimer. Mg(2+) is required as a cofactor.

The protein localises to the cytoplasm. The enzyme catalyses Endonucleolytic cleavage to 5'-phosphomonoester.. Its function is as follows. Digests double-stranded RNA. Involved in the processing of primary rRNA transcript to yield the immediate precursors to the large and small rRNAs (23S and 16S). Processes some mRNAs, and tRNAs when they are encoded in the rRNA operon. Processes pre-crRNA and tracrRNA of type II CRISPR loci if present in the organism. This Rickettsia prowazekii (strain Madrid E) protein is Ribonuclease 3.